The primary structure comprises 196 residues: Pyridoxal 5'-phosphate synthase subunit PdxT (196 aa).

L-glutamine is bound at residue 47-49; sequence GES. Cys79 (nucleophile) is an active-site residue. Residues Arg106 and 134-135 contribute to the L-glutamine site; that span reads IR. Residues His170 and Glu172 each act as charge relay system in the active site.

This sequence belongs to the glutaminase PdxT/SNO family. In the presence of PdxS, forms a dodecamer of heterodimers. Only shows activity in the heterodimer.

The enzyme catalyses aldehydo-D-ribose 5-phosphate + D-glyceraldehyde 3-phosphate + L-glutamine = pyridoxal 5'-phosphate + L-glutamate + phosphate + 3 H2O + H(+). It carries out the reaction L-glutamine + H2O = L-glutamate + NH4(+). The protein operates within cofactor biosynthesis; pyridoxal 5'-phosphate biosynthesis. In terms of biological role, catalyzes the hydrolysis of glutamine to glutamate and ammonia as part of the biosynthesis of pyridoxal 5'-phosphate. The resulting ammonia molecule is channeled to the active site of PdxS. This chain is Pyridoxal 5'-phosphate synthase subunit PdxT, found in Bacillus thuringiensis subsp. konkukian (strain 97-27).